The primary structure comprises 596 residues: Fructan 1-exohydrolase (596 aa).

The N-terminal stretch at 1-20 (MAQAWAFLLPVLVLGSYVTS) is a signal peptide. D75 is a catalytic residue. N-linked (GlcNAc...) asparagine glycans are attached at residues N168, N236, and N248. A disulfide bond links C446 and C492. N567 is a glycosylation site (N-linked (GlcNAc...) asparagine).

The protein belongs to the glycosyl hydrolase 32 family.

The catalysed reaction is Hydrolysis of terminal, non-reducing (2-&gt;1)-linked beta-D-fructofuranose residues in fructans.. Inhibited by sucrose. In terms of biological role, hydrolyzes inulin-type beta-(2,1)-fructans. May play a role as a beta-(2,1)-trimmer during graminan biosynthesis. This chain is Fructan 1-exohydrolase, found in Aegilops tauschii (Tausch's goatgrass).